Reading from the N-terminus, the 439-residue chain is 3-phosphoshikimate 1-carboxyvinyltransferase (439 aa).

Residues Lys31, Ser32, and Arg36 each contribute to the 3-phosphoshikimate site. Lys31 is a phosphoenolpyruvate binding site. 2 residues coordinate phosphoenolpyruvate: Gly103 and Arg131. 3-phosphoshikimate is bound by residues Ser175, Gln177, Asp322, and Lys349. Phosphoenolpyruvate is bound at residue Gln177. The active-site Proton acceptor is the Asp322. The phosphoenolpyruvate site is built by Arg353 and Arg397.

It belongs to the EPSP synthase family. Monomer.

The protein resides in the cytoplasm. The enzyme catalyses 3-phosphoshikimate + phosphoenolpyruvate = 5-O-(1-carboxyvinyl)-3-phosphoshikimate + phosphate. It participates in metabolic intermediate biosynthesis; chorismate biosynthesis; chorismate from D-erythrose 4-phosphate and phosphoenolpyruvate: step 6/7. Catalyzes the transfer of the enolpyruvyl moiety of phosphoenolpyruvate (PEP) to the 5-hydroxyl of shikimate-3-phosphate (S3P) to produce enolpyruvyl shikimate-3-phosphate and inorganic phosphate. This Clostridium tetani (strain Massachusetts / E88) protein is 3-phosphoshikimate 1-carboxyvinyltransferase.